We begin with the raw amino-acid sequence, 393 residues long: Protein TsgA (393 aa).

The next 12 helical transmembrane spans lie at 11–31 (WISFLSYALTGALVIVTGMVM), 51–71 (FLNAGILISIFLNAWLMEIVP), 78–98 (FGFILMVLAVAGLMFSHSLAL), 101–121 (AAMFVLGLVSGITMSIGTFLI), 134–154 (LLFTDSFFSMAGMIFPMVAAF), 162–182 (WYWVYACIGLVYLAIFILTFG), 206–226 (IGVLFLAVAALCYILGQLGFI), 245–265 (ALVSDFWMSYMFGMWAFSFIL), 273–293 (ILTVLAGMAAVLMYLFITGTQ), 298–318 (WFILTLGFFSSAIYTSIITLG), 332–352 (FILTCGTIGTMLTFVVTGPIV), and 361–381 (LLTANGLYAVVFVMCFALGFV).

Belongs to the major facilitator superfamily. TsgA family.

The protein resides in the cell inner membrane. The polypeptide is Protein TsgA (Salmonella heidelberg (strain SL476)).